The primary structure comprises 620 residues: Chaperone protein HscA homolog (620 aa).

Belongs to the heat shock protein 70 family.

Chaperone involved in the maturation of iron-sulfur cluster-containing proteins. Has a low intrinsic ATPase activity which is markedly stimulated by HscB. This Acinetobacter baylyi (strain ATCC 33305 / BD413 / ADP1) protein is Chaperone protein HscA homolog.